Consider the following 217-residue polypeptide: Probable GTP-binding protein EngB (217 aa).

One can recognise an EngB-type G domain in the interval 24-207 (SQPEICFAGR…HELIESWLIP (184 aa)). Residues 32 to 39 (GRSNAGKS), 59 to 63 (GRTQH), 81 to 84 (DLPG), 148 to 151 (TKCD), and 185 to 188 (LFSA) each bind GTP. Ser39 and Thr61 together coordinate Mg(2+).

Belongs to the TRAFAC class TrmE-Era-EngA-EngB-Septin-like GTPase superfamily. EngB GTPase family. Mg(2+) is required as a cofactor.

Functionally, necessary for normal cell division and for the maintenance of normal septation. The protein is Probable GTP-binding protein EngB of Paraburkholderia phytofirmans (strain DSM 17436 / LMG 22146 / PsJN) (Burkholderia phytofirmans).